The primary structure comprises 58 residues: TRGMLAYVEKIQREERKHGVDTLAHQKWSGANYYDRVLRTVQGGMTSTAAMGKGVTEE.

The protein belongs to the isocitrate lyase/PEP mutase superfamily. Isocitrate lyase family. In terms of assembly, homotetramer. It depends on Mg(2+) as a cofactor.

It is found in the glyoxysome. It carries out the reaction D-threo-isocitrate = glyoxylate + succinate. The protein operates within carbohydrate metabolism; glyoxylate cycle; (S)-malate from isocitrate: step 1/2. Involved in storage lipid mobilization during the growth of higher plant seedling. The sequence is that of Isocitrate lyase from Helianthus annuus (Common sunflower).